The primary structure comprises 335 residues: MKIGVIGSGSFGTALGSLLADKGYEVTLWCRNDSQVESINRNHINNKHLPNFTLPEKLTASKDLRNVVQGKDMIVSSPPSHALSEVLREIKEYLPEKVPIVSASKGIENGTLRLVSEIFESELPEKYHSYLSYLSGPSFAKEIIQKVPTIVSIASKNETTARKVQEIFSFLYFRTYWTPDVIGVEVGGSLKNVIALAAGVSDGLGFGQNTRAALITRGLNEITKIGLKLGADPMTFLGPSGMGDLILTCCGEQSRNRTVGFRLGKGETLEQILSSMNEVAEGVKTTQSAYELSQKLGIEMAITNEVYKMLYEGKNPREVVKDLMKRDLKREGVSV.

The NADPH site is built by Ser-10, Phe-11, Arg-31, and Lys-105. Positions 105, 136, and 138 each coordinate sn-glycerol 3-phosphate. Ala-140 provides a ligand contact to NADPH. Positions 191, 244, 254, 255, and 256 each coordinate sn-glycerol 3-phosphate. Catalysis depends on Lys-191, which acts as the Proton acceptor. An NADPH-binding site is contributed by Arg-255. Residues Val-279 and Glu-281 each contribute to the NADPH site.

It belongs to the NAD-dependent glycerol-3-phosphate dehydrogenase family.

Its subcellular location is the cytoplasm. It carries out the reaction sn-glycerol 3-phosphate + NAD(+) = dihydroxyacetone phosphate + NADH + H(+). The enzyme catalyses sn-glycerol 3-phosphate + NADP(+) = dihydroxyacetone phosphate + NADPH + H(+). The protein operates within membrane lipid metabolism; glycerophospholipid metabolism. Functionally, catalyzes the reduction of the glycolytic intermediate dihydroxyacetone phosphate (DHAP) to sn-glycerol 3-phosphate (G3P), the key precursor for phospholipid synthesis. This Leptospira interrogans serogroup Icterohaemorrhagiae serovar copenhageni (strain Fiocruz L1-130) protein is Glycerol-3-phosphate dehydrogenase [NAD(P)+].